The primary structure comprises 493 residues: Glycylpeptide N-tetradecanoyltransferase (493 aa).

The interval 1 to 30 is disordered; that stretch reads MSDSKDSKGKAPQKPNDAEQTPGGKLTPQA. Residues 82–85, 216–218, and 224–228 each bind tetradecanoyl-CoA; these read FKFW, LCI, and SKRLA. Residue leucine 493 is the Proton acceptor; via carboxylate of the active site.

The protein belongs to the NMT family. In terms of assembly, monomer.

It is found in the cytoplasm. The catalysed reaction is N-terminal glycyl-[protein] + tetradecanoyl-CoA = N-tetradecanoylglycyl-[protein] + CoA + H(+). Adds a myristoyl group to the N-terminal glycine residue of certain cellular proteins. The sequence is that of Glycylpeptide N-tetradecanoyltransferase (swoF) from Emericella nidulans (strain FGSC A4 / ATCC 38163 / CBS 112.46 / NRRL 194 / M139) (Aspergillus nidulans).